The sequence spans 553 residues: Transcriptional regulator HilA (553 aa).

The segment at residues 11–107 is a DNA-binding region (ompR/PhoB-type); that stretch reads NKKFVFDDFI…LYGQGYRFNR (97 aa). Aspartate 62 is subject to 4-aspartylphosphate. A TPR repeat occupies 372–405; sequence ADIKYYYGWNLFMAGQLEEALQTINECLKLDPTR.

Functionally, the main transcriptional regulator of the Salmonella pathogenicity island 1 (SPI1) gene expression. Activates the expression of invasion genes by a direct action at their promoters and also indirectly by increasing the level of invF. Also binds upstream of prgH and directly activates the expression of prgHIJK operon. The chain is Transcriptional regulator HilA (hilA) from Salmonella typhi.